Consider the following 145-residue polypeptide: MNNERLDNISNSLGISKRKRTLFELEQISDNEMKLIIKNGKLNLSVPWFGMSGNTPCTLVPAGLFEAIINTLKNAQKENFELKLEKSIWQHIPVDFGDVWSVAIDEIKKSKFKKEPNLDRVVKKIKKEHPNLFVDMQSLIQSKEN.

Belongs to the UPF0763 family.

The sequence is that of UPF0763 protein CFF8240_1572 from Campylobacter fetus subsp. fetus (strain 82-40).